Reading from the N-terminus, the 116-residue chain is Large ribosomal subunit protein bL17 (116 aa).

The protein belongs to the bacterial ribosomal protein bL17 family. Part of the 50S ribosomal subunit. Contacts protein L32.

This Trichodesmium erythraeum (strain IMS101) protein is Large ribosomal subunit protein bL17.